Here is a 283-residue protein sequence, read N- to C-terminus: Pantothenate synthetase (283 aa).

30-37 (MGALHRGH) provides a ligand contact to ATP. The active-site Proton donor is histidine 37. Glutamine 61 contributes to the (R)-pantoate binding site. Residue glutamine 61 participates in beta-alanine binding. An ATP-binding site is contributed by 147–150 (GQKD). A (R)-pantoate-binding site is contributed by glutamine 153. ATP contacts are provided by residues isoleucine 176 and 184–187 (MSSR).

Belongs to the pantothenate synthetase family. Homodimer.

Its subcellular location is the cytoplasm. The enzyme catalyses (R)-pantoate + beta-alanine + ATP = (R)-pantothenate + AMP + diphosphate + H(+). Its pathway is cofactor biosynthesis; (R)-pantothenate biosynthesis; (R)-pantothenate from (R)-pantoate and beta-alanine: step 1/1. Its function is as follows. Catalyzes the condensation of pantoate with beta-alanine in an ATP-dependent reaction via a pantoyl-adenylate intermediate. The protein is Pantothenate synthetase of Cytophaga hutchinsonii (strain ATCC 33406 / DSM 1761 / CIP 103989 / NBRC 15051 / NCIMB 9469 / D465).